Reading from the N-terminus, the 627-residue chain is DNA-directed RNA polymerase subunit gamma (627 aa).

Cys70, Cys72, Cys85, and Cys88 together coordinate Zn(2+). Positions 468, 470, and 472 each coordinate Mg(2+).

This sequence belongs to the RNA polymerase beta' chain family. RpoC1 subfamily. As to quaternary structure, in cyanobacteria the RNAP catalytic core is composed of 2 alpha, 1 beta, 1 beta', 1 gamma and 1 omega subunit. When a sigma factor is associated with the core the holoenzyme is formed, which can initiate transcription. Requires Mg(2+) as cofactor. Zn(2+) serves as cofactor.

It catalyses the reaction RNA(n) + a ribonucleoside 5'-triphosphate = RNA(n+1) + diphosphate. DNA-dependent RNA polymerase catalyzes the transcription of DNA into RNA using the four ribonucleoside triphosphates as substrates. This is DNA-directed RNA polymerase subunit gamma from Synechococcus sp. (strain JA-2-3B'a(2-13)) (Cyanobacteria bacterium Yellowstone B-Prime).